A 471-amino-acid chain; its full sequence is A-type ATP synthase subunit B (471 aa).

This sequence belongs to the ATPase alpha/beta chains family. As to quaternary structure, has multiple subunits with at least A(3), B(3), C, D, E, F, H, I and proteolipid K(x).

The protein resides in the cell membrane. In terms of biological role, component of the A-type ATP synthase that produces ATP from ADP in the presence of a proton gradient across the membrane. The B chain is a regulatory subunit. This chain is A-type ATP synthase subunit B, found in Natronomonas pharaonis (strain ATCC 35678 / DSM 2160 / CIP 103997 / JCM 8858 / NBRC 14720 / NCIMB 2260 / Gabara) (Halobacterium pharaonis).